Here is a 429-residue protein sequence, read N- to C-terminus: Glutamate-1-semialdehyde 2,1-aminomutase 2 (429 aa).

Lys-268 is subject to N6-(pyridoxal phosphate)lysine.

Belongs to the class-III pyridoxal-phosphate-dependent aminotransferase family. HemL subfamily. As to quaternary structure, homodimer. It depends on pyridoxal 5'-phosphate as a cofactor.

Its subcellular location is the cytoplasm. It catalyses the reaction (S)-4-amino-5-oxopentanoate = 5-aminolevulinate. The protein operates within porphyrin-containing compound metabolism; protoporphyrin-IX biosynthesis; 5-aminolevulinate from L-glutamyl-tRNA(Glu): step 2/2. This Listeria monocytogenes serotype 4a (strain HCC23) protein is Glutamate-1-semialdehyde 2,1-aminomutase 2.